A 724-amino-acid polypeptide reads, in one-letter code: RINT1-like protein (724 aa).

The RINT1/TIP20 domain occupies 163–724 (RLHAVQAQSL…LERRMDIKMF (562 aa)).

Belongs to the RINT1 family.

In terms of biological role, during cytokinesis in male meiotic cells, required for completion of cleavage furrow ingression possibly in conjunction with Zw10. Required for maintenance of Golgi stack number and morphology. Essential for acroblast assembly. In Drosophila melanogaster (Fruit fly), this protein is RINT1-like protein.